Consider the following 505-residue polypeptide: AMP phosphorylase (505 aa).

Residues Gly170, 196-201 (SRAITS), and Thr205 contribute to the AMP site. Asp258 acts as the Proton donor in catalysis. 2 residues coordinate AMP: Ser266 and Lys290.

Belongs to the thymidine/pyrimidine-nucleoside phosphorylase family. Type 2 subfamily.

It catalyses the reaction AMP + phosphate = alpha-D-ribose 1,5-bisphosphate + adenine. The enzyme catalyses CMP + phosphate = cytosine + alpha-D-ribose 1,5-bisphosphate. It carries out the reaction UMP + phosphate = alpha-D-ribose 1,5-bisphosphate + uracil. Its function is as follows. Catalyzes the conversion of AMP and phosphate to adenine and ribose 1,5-bisphosphate (R15P). Exhibits phosphorylase activity toward CMP and UMP in addition to AMP. Functions in an archaeal AMP degradation pathway, together with R15P isomerase and RubisCO. The chain is AMP phosphorylase from Methanococcus maripaludis (strain C6 / ATCC BAA-1332).